The sequence spans 72 residues: Translation initiation factor IF-1 (72 aa).

Residues 1–72 (MAKDDVIEVE…TRGRITYRYK (72 aa)) enclose the S1-like domain. Tyr60 carries the post-translational modification Phosphotyrosine.

Belongs to the IF-1 family. As to quaternary structure, component of the 30S ribosomal translation pre-initiation complex which assembles on the 30S ribosome in the order IF-2 and IF-3, IF-1 and N-formylmethionyl-tRNA(fMet); mRNA recruitment can occur at any time during PIC assembly.

Its subcellular location is the cytoplasm. In terms of biological role, one of the essential components for the initiation of protein synthesis. Stabilizes the binding of IF-2 and IF-3 on the 30S subunit to which N-formylmethionyl-tRNA(fMet) subsequently binds. Helps modulate mRNA selection, yielding the 30S pre-initiation complex (PIC). Upon addition of the 50S ribosomal subunit IF-1, IF-2 and IF-3 are released leaving the mature 70S translation initiation complex. This chain is Translation initiation factor IF-1, found in Geobacillus thermodenitrificans (strain NG80-2).